The sequence spans 372 residues: Ciliary neurotrophic factor receptor subunit alpha (372 aa).

The first 22 residues, 1-22 (MAAPVPWACCAVLAAAAAVVYA), serve as a signal peptide directing secretion. The 78-residue stretch at 27–104 (PQEAPHVQYE…WHLRHQVLLH (78 aa)) folds into the Ig-like C2-type domain. Residues cysteine 46 and cysteine 89 are joined by a disulfide bond. N-linked (GlcNAc...) asparagine glycosylation is found at asparagine 60, asparagine 70, asparagine 142, and asparagine 190. Fibronectin type-III domains follow at residues 108-205 (PPRE…VKPD) and 206-306 (PPEN…TEEP). A WSXWS motif motif is present at residues 290–294 (WSDWS). The disordered stretch occupies residues 301–340 (PWTEEPRHLTTEAQAAETTTSTTSSLAPPPTTKICDPGEL). A compositionally biased stretch (low complexity) spans 311-326 (TEAQAAETTTSTTSSL). A lipid anchor (GPI-anchor amidated serine) is attached at serine 342. The propeptide at 343 to 372 (GGGPSAPFLVSVPITLALAAAAATASSLLI) is removed in mature form.

Belongs to the type I cytokine receptor family. Type 3 subfamily. As to quaternary structure, forms a heterotrimer with LIFR and IL6ST. Interacts with heterodimeric neurotropic cytokine composed of CLCF1/CLC and CRLF1/CLF-1. Either alone or in complex with the heterodimer CLCF1-CRLF1 interacts with SORL1; this interaction may promote internalization and lysosomal degradation. Component of a receptor complex composed of IL6ST/GP130, IL27RA/WSX1 and CNTFR which interacts with the neuroprotective peptide humanin. Nervous system and skeletal muscle.

It localises to the cell membrane. Its function is as follows. Binds to CNTF. The alpha subunit provides the receptor specificity. Receptor for heterodimeric neurotropic cytokine composed of CLCF1/CLC and CRLF1/CLF-1. Acts as a receptor for the neuroprotective peptide humanin as part of a complex with IL6ST/GP130 and IL27RA/WSX1. This is Ciliary neurotrophic factor receptor subunit alpha (CNTFR) from Homo sapiens (Human).